Reading from the N-terminus, the 142-residue chain is Hemoglobin subunit alpha (142 aa).

Residues 2 to 142 form the Globin domain; the sequence is KLSAEDKHNV…VGHVLTSKYR (141 aa). O2 is bound at residue H59. H88 lines the heme b pocket.

It belongs to the globin family. In terms of assembly, heterotetramer of two alpha chains and two beta chains. In terms of tissue distribution, red blood cells.

Functionally, involved in oxygen transport from the lung to the various peripheral tissues. The sequence is that of Hemoglobin subunit alpha (HBA) from Taricha granulosa (Roughskin newt).